Here is a 100-residue protein sequence, read N- to C-terminus: Urease subunit gamma (100 aa).

The protein belongs to the urease gamma subunit family. As to quaternary structure, heterotrimer of UreA (gamma), UreB (beta) and UreC (alpha) subunits. Three heterotrimers associate to form the active enzyme.

Its subcellular location is the cytoplasm. The catalysed reaction is urea + 2 H2O + H(+) = hydrogencarbonate + 2 NH4(+). Its pathway is nitrogen metabolism; urea degradation; CO(2) and NH(3) from urea (urease route): step 1/1. In Paraburkholderia xenovorans (strain LB400), this protein is Urease subunit gamma.